The chain runs to 517 residues: Cytochrome P450 52A8 (517 aa).

Cys-464 contacts heme.

This sequence belongs to the cytochrome P450 family. Heme serves as cofactor.

Together with an NADPH cytochrome P450 the enzyme system catalyzes the terminal hydroxylation as the first step in the assimilation of alkanes and fatty acids. Preferentially hydroxylates lauric acid. The sequence is that of Cytochrome P450 52A8 (CYP52A8) from Candida tropicalis (Yeast).